Here is a 377-residue protein sequence, read N- to C-terminus: Probable G-protein coupled receptor F27E5.8 (377 aa).

Residues 1-34 are Extracellular-facing; it reads MSEQDSSSPKYMRFLLGNFTSAEMVTDGNFLIYC. N-linked (GlcNAc...) asparagine glycosylation is present at N18. The chain crosses the membrane as a helical span at residues 35–55; that stretch reads IEMGLLVIGVLENIFMIGAVF. Topologically, residues 56 to 71 are cytoplasmic; the sequence is STSCLHLNLRILICNC. Residues 72-92 traverse the membrane as a helical segment; the sequence is CLGFILMAVGRAMIAVPLCIA. Residues 93 to 105 lie on the Extracellular side of the membrane; the sequence is HLRDVDISSHAWC. Residues 106-126 traverse the membrane as a helical segment; it reads FIANAVHHSSADSVCLSFVFI. Residues 127 to 144 lie on the Cytoplasmic side of the membrane; it reads MLERTAGTIWSKDYEKTK. The chain crosses the membrane as a helical span at residues 145–165; the sequence is IHIFPCIFAFLQWFIPMFMIL. Residues 166–195 are Extracellular-facing; the sequence is GNFLDRANRMEHFLLYPHLPCQIEYLTPTM. The chain crosses the membrane as a helical span at residues 196 to 216; sequence FMITIFIIVIGFIASVGGITI. At 217 to 251 the chain is on the cytoplasmic side; sequence VYNKNIKKYNTRDIWFNTVNLSERYQITENIRSTH. The chain crosses the membrane as a helical span at residues 252–272; it reads LLFPLLALMLIFSTLSVSVLI. Topologically, residues 273–303 are extracellular; it reads YGGYWVSVMTKEPARFEEVVKWFGRGGEAAQ. A helical membrane pass occupies residues 304–324; that stretch reads LFDIITAIYTISFPICAFICH. The Cytoplasmic portion of the chain corresponds to 325-377; sequence PNLFRFLRKFIGWNSYAVRPSNLNEIGGFEMSTAPIRTQTEFHFQELSRQWNT.

This sequence belongs to the G-protein coupled receptor 1 family.

The protein localises to the cell membrane. This Caenorhabditis elegans protein is Probable G-protein coupled receptor F27E5.8.